The sequence spans 222 residues: MRTTSFAKVAALCGLLALSGCASKITQPDKYSGFLNNYSDLKETTSATGKPVLRWVDPSFDQSKYDSIVWNPITYYPVPKPSTQVGQKVLDKILNYTNTEMKEAIAQRKPLVTTAGPRSLIFRGAITGVDTSKEGLQFYEVVPVALVVAGTQMATGHRTMDTRLYFEGELIDAATNKPVIKVVRQGEGKDLNNESTPMAFENIKQVIDDMATDATMFDVNKK.

The first 20 residues, 1 to 20, serve as a signal peptide directing secretion; the sequence is MRTTSFAKVAALCGLLALSG. Cysteine 21 carries N-palmitoyl cysteine lipidation. Residue cysteine 21 is the site of S-diacylglycerol cysteine attachment.

It localises to the cell membrane. This is an uncharacterized protein from Escherichia coli O157:H7.